A 115-amino-acid chain; its full sequence is Yop proteins translocation protein M (115 aa).

The segment at 19–39 is disordered; that stretch reads HGGQAGRLTETNPLTENSHQI. The segment covering 27–39 has biased composition (polar residues); that stretch reads TETNPLTENSHQI.

Its function is as follows. Belongs to an operon involved in the translocation of Yop proteins across the bacterial membranes or in the specific control of this function. This Yersinia enterocolitica protein is Yop proteins translocation protein M (yscM).